We begin with the raw amino-acid sequence, 634 residues long: 3-dehydroshikimate dehydratase (634 aa).

A divalent metal cation is bound by residues E134, D165, Q191, and E239. 2 consecutive VOC domains span residues 295–414 and 440–590; these read GIEF…LVER and RVDH…VFTE. Positions 443, 521, and 599 each coordinate Mg(2+).

It belongs to the bacterial two-domain DSD family. As to quaternary structure, homodimer. It depends on Co(2+) as a cofactor. Ni(2+) serves as cofactor. Requires Mg(2+) as cofactor. The cofactor is Mn(2+).

The catalysed reaction is 3-dehydroshikimate = 3,4-dihydroxybenzoate + H2O. It participates in aromatic compound metabolism; 3,4-dihydroxybenzoate biosynthesis. In terms of biological role, catalyzes the conversion of 3-dehydroshikimate to protocatechuate (3,4-dihydroxybenzoate), a common intermediate of quinate and shikimate degradation pathways. Is required for growth on either quinate or shikimate as a sole carbon source. The protein is 3-dehydroshikimate dehydratase of Pseudomonas aeruginosa (strain ATCC 15692 / DSM 22644 / CIP 104116 / JCM 14847 / LMG 12228 / 1C / PRS 101 / PAO1).